The following is a 489-amino-acid chain: IPT/TIG domain-containing protein BACOVA_02650 (489 aa).

The first 27 residues, 1–27 (MKSIYKYLDTRLFLIGLLVLPFLAVVS), serve as a signal peptide directing secretion. Cys28 carries N-palmitoyl cysteine lipidation. Cys28 carries S-diacylglycerol cysteine lipidation. 3 consecutive IPT/TIG domains span residues 57–103 (VNPG…PNEL), 136–204 (PYIT…TAPA), and 232–304 (PVVT…AIGG).

It localises to the cell outer membrane. It participates in glucan metabolism; xyloglucan degradation. Its function is as follows. Polysaccharide-binding protein present at the surface of the cell. Probably mediates xyloglucan-binding before xyloglucan transport in the periplasm for degradation. In Bacteroides ovatus (strain ATCC 8483 / DSM 1896 / JCM 5824 / BCRC 10623 / CCUG 4943 / NCTC 11153), this protein is IPT/TIG domain-containing protein BACOVA_02650.